A 262-amino-acid chain; its full sequence is MLERMQEALQRLRKERPVILNTTNYVSMDFLANCFLAIGASPIMSVSDLELEELIELSSAVYINIGTLDHLFIQRAYRTVDLAVRQNKPVIFDPVAAGATKIRTEVSHHLLAHATIVRGNASEILSFGDVTMKTRGVDSTHSTQDAKDVATALAKECLCGCAIAVSGAIDFITDGQRHTTVELGDPFMSYVVGMGCSLTGVFAAFRSVIDDSFEATKLGIEYFTLCGMLARERCEGPGLFKAYLLDELYASDFSRMRQYYDR.

Met44 contacts substrate. ATP is bound by residues Arg118 and Ser166. Gly193 lines the substrate pocket.

Belongs to the Thz kinase family. The cofactor is Mg(2+).

It catalyses the reaction 5-(2-hydroxyethyl)-4-methylthiazole + ATP = 4-methyl-5-(2-phosphooxyethyl)-thiazole + ADP + H(+). Its pathway is cofactor biosynthesis; thiamine diphosphate biosynthesis; 4-methyl-5-(2-phosphoethyl)-thiazole from 5-(2-hydroxyethyl)-4-methylthiazole: step 1/1. Catalyzes the phosphorylation of the hydroxyl group of 4-methyl-5-beta-hydroxyethylthiazole (THZ). The sequence is that of Hydroxyethylthiazole kinase from Chlamydia abortus (strain DSM 27085 / S26/3) (Chlamydophila abortus).